Reading from the N-terminus, the 1146-residue chain is Myosin heavy chain kinase A (1146 aa).

Residues 1–25 (MFNIKKRKESITGIPPINVNSPQSV) form a disordered region. The stretch at 100 to 120 (EQMEDQLEKTMKVVRNHTDSL) forms a coiled coil. Positions 158–191 (IQEKKSTSSPLVKGGISGGGGSGGDDSFDGANIS) are disordered. Gly residues predominate over residues 172–181 (GISGGGGSGG). 2 coiled-coil regions span residues 187 to 241 (GANI…KRIE) and 297 to 502 (SKIE…ASIS). The tract at residues 500–551 (SISPISSVPKSPITTKRSSIILNSPPMTSQQSSPKIQDLLSSSGSSSVSGIN) is pseudosubstrate/autoinhibitory domain. Residues 521–534 (LNSPPMTSQQSSPK) are compositionally biased toward polar residues. The segment at 521-540 (LNSPPMTSQQSSPKIQDLLS) is disordered. Residues 552 to 852 (ISSETGEMGI…KVGAKQLPKA (301 aa)) are catalytic. Residues 564–808 (EFDPIINKWI…VCALLDLDVK (245 aa)) form the Alpha-type protein kinase domain. Position 778–783 (778–783 (GLGNLG)) interacts with ATP. 7 WD repeats span residues 867–897 (SFRE…RVFD), 910–938 (GHRK…KVHI), 952–980 (GHTG…KVWD), 993–1021 (VHTK…YVWD), 1033–1061 (GHED…KIWD), 1073–1101 (GHWN…KVWD), and 1114–1142 (SHSL…KVWE).

This sequence belongs to the protein kinase superfamily. Alpha-type protein kinase family. ALPK subfamily. As to quaternary structure, oligomer. Requires Mg(2+) as cofactor. It depends on Mn(2+) as a cofactor. The N-terminus is blocked.

It carries out the reaction L-threonyl-[myosin heavy-chain] + ATP = O-phospho-L-threonyl-[myosin heavy-chain] + ADP + H(+). Its function is as follows. Catalyzes its autophosphorylation, which is needed for enzymatic activity and phosphorylates myosin II heavy chain at a threonine in the C-terminal tail region. This phosphorylation is critical for regulating the assembly and disassembly of myosin II filament, affecting myosin localization during an array of cellular contractile events, including cytokinesis and capping of cell surface receptors as well as chemotactic cell locomotion. The sequence is that of Myosin heavy chain kinase A (mhkA) from Dictyostelium discoideum (Social amoeba).